A 406-amino-acid chain; its full sequence is Probable endo-xylogalacturonan hydrolase A (406 aa).

Positions 1-18 (MISLNSIFLLSLVGLSRA) are cleaved as a signal peptide. The interval 20-49 (PSRSETSPDRTIKPRAACTPTAGGSSSTDD) is disordered. PbH1 repeat units lie at residues 183-213 (TSNA…DIGA), 214-235 (STYV…AFKP), 237-257 (ANYV…SVGS), 266-289 (VQNV…KTYP), 299-320 (VKNA…QIQS), and 368-390 (TCDV…ILCG). Aspartate 228 acts as the Proton donor in catalysis. N-linked (GlcNAc...) asparagine glycosylation is present at asparagine 244. Residue histidine 251 is part of the active site. Asparagine 273, asparagine 278, and asparagine 301 each carry an N-linked (GlcNAc...) asparagine glycan.

The protein belongs to the glycosyl hydrolase 28 family.

The protein localises to the secreted. Pectinolytic enzyme involved in the degradation of xylogalacturonan (xga), a galacturonan backbone heavily substituted with xylose, and which is one important component of the hairy regions of pectin. Activity requires a galacturonic acid backbone substituted with xylose. The chain is Probable endo-xylogalacturonan hydrolase A (xghA) from Aspergillus oryzae (strain ATCC 42149 / RIB 40) (Yellow koji mold).